A 142-amino-acid polypeptide reads, in one-letter code: MLGLHVGTLISLFLCILLEPVEGSLMQPCQPINQTVSLEKEGCPTCLVIQTPICSGHCVTKEPVFKSPFSTVYQHVCTYRDVRYETIRLPDCPPWVDPHVTYPVALSCDCSLCNMDTSDCTIESLQPDFCITQRVLTDGDMW.

An N-terminal signal peptide occupies residues 1–23 (MLGLHVGTLISLFLCILLEPVEG). Cystine bridges form between Cys-29–Cys-77, Cys-43–Cys-92, Cys-46–Cys-130, Cys-54–Cys-108, Cys-58–Cys-110, and Cys-113–Cys-120. The N-linked (GlcNAc...) asparagine glycan is linked to Asn-33.

The protein belongs to the glycoprotein hormones subunit beta family. In terms of assembly, heterodimer of an alpha and a beta chain.

The protein localises to the secreted. Its function is as follows. Involved in gametogenesis and steroidogenesis. The polypeptide is Gonadotropin subunit beta-2 (cgbb) (Oncorhynchus keta (Chum salmon)).